The chain runs to 129 residues: MSHLQNLLLDTLLGTKHVDSAALIKLQERSLCVASPGFSVMPSDVRTLVNGFAKNPLKTRREGLYFKEKDYKCVRADDYSLYAKNENTGVIVVKTHLYLLVATYSEGMYPSVCVEATEKLGDYLRRKGN.

This sequence belongs to the profilin family.

The protein resides in the cytoplasm. Involved in male fertility. Required for manchette development and acrosome biogenesis during spermiogenesis. Binds in vitro to phospholipids, including phosphatidylinositol 3-phosphate (PtdIns(3)P), phosphatidylinositol 4,5-bisphosphate (PtdIns(4,5)P2), phosphatidylinositol 4-phosphate (PtdIns(4)P) and phosphatidic acid (PA). Contrary to other profilin family members, does not bind to actin in vitro. The protein is Profilin-4 (PFN4) of Bos taurus (Bovine).